The primary structure comprises 809 residues: Pentatricopeptide repeat-containing protein At1g11290, chloroplastic (809 aa).

The N-terminal 46 residues, 1-46 (MSSQLVQFSTVPQIPNPPSRHRHFLSERNYIPANVYEHPAALLLER), are a transit peptide targeting the chloroplast. PPR repeat units follow at residues 68-98 (EHFFQTKLVSLFCRYGSVDEAARVFEPIDSK), 99-133 (LNVLYHTMLKGFAKVSDLDKALQFFVRMRYDDVEP), 134-168 (VVYNFTYLLKVCGDEAELRVGKEIHGLLVKSGFSL), 169-199 (DLFAMTGLENMYAKCRQVNEARKVFDRMPER), 200-234 (DLVSWNTIVAGYSQNGMARMALEMVKSMCEENLKP), 235-269 (SFITIVSVLPAVSALRLISVGKEIHGYAMRSGFDS), 270-300 (LVNISTALVDMYAKCGSLETARQLFDGMLER), 301-335 (NVVSWNSMIDAYVQNENPKEAMLIFQKMLDEGVKP), 336-370 (TDVSVMGALHACADLGDLERGRFIHKLSVELGLDR), 371-401 (NVSVVNSLISMYCKCKEVDTAASMFGKLQSR), 402-436 (TLVSWNAMILGFAQNGRPIDALNYFSQMRSRTVKP), 437-471 (DTFTYVSVITAIAELSITHHAKWIHGVVMRSCLDK), 472-502 (NVFVTTALVDMYAKCGAIMIARLIFDMMSER), 503-537 (HVTTWNAMIDGYGTHGFGKAALELFEEMQKGTIKP), 538-568 (NGVTFLSVISACSHSGLVEAGLKCFYMMKEN), and 574-604 (SMDHYGAMVDLLGRAGRLNEAWDFIMQMPVK). The segment at 609-684 (VYGAMLGACQ…TPGCSMVEIK (76 aa)) is type E motif. The segment at 685-715 (NEVHSFFSGSTAHPDSKKIYAFLEKLICHIK) is type E(+) motif. A type DYW motif region spans residues 716–809 (EAGYVPDTNL…NGACSCGDYW (94 aa)).

Belongs to the PPR family. PCMP-H subfamily.

It is found in the plastid. Its subcellular location is the chloroplast. Functionally, involved in multiple sites RNA editing events in chloroplasts. Involved in the editing of the site 7 of ndhB (ndhB-7) and site 5 of ndhD (ndhD-5) transcripts, which are two plastid-encoded subunits of the chloroplast NAD(P)H dehydrogenase (NDH) complex. Involved in the editing of the site 3 of rpoB (rpoB-3) transcript. Required for the activity of the NDH complex of the photosynthetic electron transport chain. Possesses low endoribonuclease activity in vitro. The protein is Pentatricopeptide repeat-containing protein At1g11290, chloroplastic (PCMP-H40) of Arabidopsis thaliana (Mouse-ear cress).